The primary structure comprises 607 residues: UvrABC system protein C (607 aa).

One can recognise a GIY-YIG domain in the interval 16-94 (GRPGVYRMFD…IKEWRPPYNI (79 aa)). The UVR domain occupies 203–238 (HALTNELSTAMEEAAINLEFERAAELRDQIALLRRV).

It belongs to the UvrC family. In terms of assembly, interacts with UvrB in an incision complex.

It is found in the cytoplasm. Functionally, the UvrABC repair system catalyzes the recognition and processing of DNA lesions. UvrC both incises the 5' and 3' sides of the lesion. The N-terminal half is responsible for the 3' incision and the C-terminal half is responsible for the 5' incision. In Pseudomonas fluorescens (strain Pf0-1), this protein is UvrABC system protein C.